Here is a 431-residue protein sequence, read N- to C-terminus: Serine--tRNA ligase (431 aa).

The interval 41–66 (QSRTQELQAERNARSKSIGEAARRGE) is disordered. 240 to 242 (TSE) contributes to the L-serine binding site. Residue 271-273 (RSE) participates in ATP binding. Glu294 is a binding site for L-serine. Residue 358 to 361 (EISS) participates in ATP binding. Ser392 lines the L-serine pocket.

Belongs to the class-II aminoacyl-tRNA synthetase family. Type-1 seryl-tRNA synthetase subfamily. In terms of assembly, homodimer. The tRNA molecule binds across the dimer.

The protein resides in the cytoplasm. It carries out the reaction tRNA(Ser) + L-serine + ATP = L-seryl-tRNA(Ser) + AMP + diphosphate + H(+). The enzyme catalyses tRNA(Sec) + L-serine + ATP = L-seryl-tRNA(Sec) + AMP + diphosphate + H(+). The protein operates within aminoacyl-tRNA biosynthesis; selenocysteinyl-tRNA(Sec) biosynthesis; L-seryl-tRNA(Sec) from L-serine and tRNA(Sec): step 1/1. Functionally, catalyzes the attachment of serine to tRNA(Ser). Is also able to aminoacylate tRNA(Sec) with serine, to form the misacylated tRNA L-seryl-tRNA(Sec), which will be further converted into selenocysteinyl-tRNA(Sec). In Aeromonas hydrophila subsp. hydrophila (strain ATCC 7966 / DSM 30187 / BCRC 13018 / CCUG 14551 / JCM 1027 / KCTC 2358 / NCIMB 9240 / NCTC 8049), this protein is Serine--tRNA ligase.